The primary structure comprises 1007 residues: uncharacterized protein (1007 aa).

The signal sequence occupies residues 1–51 (MTTPISNSPSSIPTVTVSTTTASSGSLGTSTVSSTTTSTSVAQTATTTSSA). Residues 1–96 (MTTPISNSPS…SATANKTSSA (96 aa)) show a composition bias toward low complexity. Disordered regions lie at residues 1 to 186 (MTTP…GNPI), 200 to 224 (TYTTSPRNENIFSPGPEGLPNMSLP), 387 to 533 (NWGS…GPDI), 543 to 562 (TVYPGENGGSTEGPLPANQN), 578 to 645 (ETII…GPDI), 655 to 674 (TVYPGENGGSTEGPLPANQN), and 712 to 757 (DLED…GPDI). The span at 118-163 (DGEVSSNYDDVDTPTNSSDSTVDSDYQDVETQYKTISNNGENTYET) shows a compositional bias: polar residues. The segment covering 167 to 176 (HGEKNTHVQE) has biased composition (basic and acidic residues). 2 stretches are compositionally biased toward polar residues: residues 177–186 (SHASGTGNPI) and 200–210 (TYTTSPRNENI). Residues 423 to 442 (VINVNVNVGGTNVNIGDTNV) show a composition bias toward low complexity. Polar residues predominate over residues 443–453 (SKGSGTPTSSQ). The span at 469–491 (IDTNNQTNGDINTNDNSNNVDGS) shows a compositional bias: low complexity. A compositionally biased stretch (polar residues) spans 507–523 (DTESTNGNDSGKTTSTE). Acidic residues predominate over residues 597 to 618 (ADADVEDTSDTDSGIGDDDGVS). The segment covering 619-635 (DTESTNGNNSGKTTSTE) has biased composition (low complexity). Residues 712 to 730 (DLEDVSDADSGFGDDDGIS) show a composition bias toward acidic residues. A compositionally biased stretch (polar residues) spans 732–743 (TESTNGNDSGKN).

The protein belongs to the chlamydial CPn_0572/CT_456/TC_0741 family.

This is an uncharacterized protein from Chlamydia muridarum (strain MoPn / Nigg).